The sequence spans 177 residues: Cell division inhibitor SulA (177 aa).

The tract at residues Ala-112–Tyr-118 is ftsZ binding. The lon protease binding stretch occupies residues Lys-170–His-177.

This sequence belongs to the SulA family. In terms of assembly, interacts with FtsZ. Is rapidly cleaved and degraded by the Lon protease once DNA damage is repaired.

Functionally, component of the SOS system and an inhibitor of cell division. Accumulation of SulA causes rapid cessation of cell division and the appearance of long, non-septate filaments. In the presence of GTP, binds a polymerization-competent form of FtsZ in a 1:1 ratio, thus inhibiting FtsZ polymerization and therefore preventing it from participating in the assembly of the Z ring. This mechanism prevents the premature segregation of damaged DNA to daughter cells during cell division. The polypeptide is Cell division inhibitor SulA (Photorhabdus laumondii subsp. laumondii (strain DSM 15139 / CIP 105565 / TT01) (Photorhabdus luminescens subsp. laumondii)).